The chain runs to 187 residues: MALRLSVSSSHGPASSPAISTCRPAACGRFPALLGGGVASQRRSLTVVSGPETRAVIPVRSSGSDTATVGAEAEAVAVTGQVTEVNKDTFWPIVKSAGPKVVVLDMYTQWCGPCKVMAPKFQEMSEKDQDVVFLKLDCNQDNKSLAKELGIKVVPTFKILKDGKVVKEVTGAKLDELIQAIETVKSS.

The N-terminal 72 residues, 1–72, are a transit peptide targeting the chloroplast; the sequence is MALRLSVSSS…GSDTATVGAE (72 aa). The 114-residue stretch at 73-186 folds into the Thioredoxin domain; it reads AEAVAVTGQV…LIQAIETVKS (114 aa). Residues cysteine 111 and cysteine 114 each act as nucleophile in the active site. A disulfide bridge connects residues cysteine 111 and cysteine 114.

The protein belongs to the thioredoxin family. Plant F-type subfamily.

It is found in the plastid. The protein localises to the chloroplast. Thiol-disulfide oxidoreductase involved in the redox regulation of enzymes of both reductive pentose phosphate pathway (Calvin-Benson cycle) and oxidative pentose phosphate pathway. This chain is Thioredoxin F, chloroplastic, found in Oryza sativa subsp. japonica (Rice).